Here is a 304-residue protein sequence, read N- to C-terminus: Acetaldehyde dehydrogenase 4 (304 aa).

The active-site Acyl-thioester intermediate is C131. Residues 162 to 170 (SAGPGTRKN) and N273 each bind NAD(+).

This sequence belongs to the acetaldehyde dehydrogenase family. As to quaternary structure, heterotetramer composed of two BphI (aldolase) and two BphJ (dehydrogenase).

The catalysed reaction is acetaldehyde + NAD(+) + CoA = acetyl-CoA + NADH + H(+). The enzyme catalyses propanal + NAD(+) + CoA = propanoyl-CoA + NADH + H(+). The protein operates within xenobiotic degradation; polychlorinated biphenyl degradation. Its activity is regulated as follows. Bound pyruvate or other intermediates in the aldol addition reaction catalyzed by BphI allosterically activates BphJ reductive deacylation activity. Its function is as follows. Catalyzes the conversion of acetaldehyde or propanal to acetyl-CoA or propanoyl-CoA, respectively, using NAD(+) and coenzyme A. Displays broad specificity since it can utilize aliphatic aldehydes from two to five carbons in length as substrates; the aldehyde substrates can be directly channeled from the aldolase BphI to the dehydrogenase BphJ. Is the final enzyme in the meta-cleavage pathway for the degradation of polychlorinated biphenyls (PCBs). Is also able to utilize NADP(+) instead of NAD(+). Is not active with succinic semialdehyde or picolinaldehyde as substrates. Can also catalyze the reverse reaction, i.e. the reductive deacylation of acetyl-CoA to acetaldehyde, which is then channeled to the BphI active site. The BphI-BphJ enzyme complex exhibits unique bidirectionality in substrate channeling and allosteric activation. The polypeptide is Acetaldehyde dehydrogenase 4 (bphJ) (Paraburkholderia xenovorans (strain LB400)).